The chain runs to 444 residues: Exodeoxyribonuclease 7 large subunit (444 aa).

Belongs to the XseA family. Heterooligomer composed of large and small subunits.

The protein resides in the cytoplasm. The enzyme catalyses Exonucleolytic cleavage in either 5'- to 3'- or 3'- to 5'-direction to yield nucleoside 5'-phosphates.. In terms of biological role, bidirectionally degrades single-stranded DNA into large acid-insoluble oligonucleotides, which are then degraded further into small acid-soluble oligonucleotides. In Pseudoalteromonas atlantica (strain T6c / ATCC BAA-1087), this protein is Exodeoxyribonuclease 7 large subunit.